The following is a 309-amino-acid chain: Aspartate carbamoyltransferase catalytic subunit (309 aa).

Positions 57 and 58 each coordinate carbamoyl phosphate. Lys86 contributes to the L-aspartate binding site. Carbamoyl phosphate-binding residues include Arg107, His135, and Gln138. L-aspartate-binding residues include Arg168 and Arg228. Carbamoyl phosphate is bound by residues Leu267 and Pro268.

It belongs to the aspartate/ornithine carbamoyltransferase superfamily. ATCase family. As to quaternary structure, heterooligomer of catalytic and regulatory chains.

It catalyses the reaction carbamoyl phosphate + L-aspartate = N-carbamoyl-L-aspartate + phosphate + H(+). The protein operates within pyrimidine metabolism; UMP biosynthesis via de novo pathway; (S)-dihydroorotate from bicarbonate: step 2/3. Its function is as follows. Catalyzes the condensation of carbamoyl phosphate and aspartate to form carbamoyl aspartate and inorganic phosphate, the committed step in the de novo pyrimidine nucleotide biosynthesis pathway. The chain is Aspartate carbamoyltransferase catalytic subunit from Nitrosopumilus maritimus (strain SCM1).